The primary structure comprises 491 residues: Probable glycine dehydrogenase (decarboxylating) subunit 2 (491 aa).

At Lys-273 the chain carries N6-(pyridoxal phosphate)lysine.

It belongs to the GcvP family. C-terminal subunit subfamily. The glycine cleavage system is composed of four proteins: P, T, L and H. In this organism, the P 'protein' is a heterodimer of two subunits. Pyridoxal 5'-phosphate serves as cofactor.

The catalysed reaction is N(6)-[(R)-lipoyl]-L-lysyl-[glycine-cleavage complex H protein] + glycine + H(+) = N(6)-[(R)-S(8)-aminomethyldihydrolipoyl]-L-lysyl-[glycine-cleavage complex H protein] + CO2. Its function is as follows. The glycine cleavage system catalyzes the degradation of glycine. The P protein binds the alpha-amino group of glycine through its pyridoxal phosphate cofactor; CO(2) is released and the remaining methylamine moiety is then transferred to the lipoamide cofactor of the H protein. In Bacillus velezensis (strain DSM 23117 / BGSC 10A6 / LMG 26770 / FZB42) (Bacillus amyloliquefaciens subsp. plantarum), this protein is Probable glycine dehydrogenase (decarboxylating) subunit 2.